We begin with the raw amino-acid sequence, 529 residues long: Peptide chain release factor 3 (529 aa).

Residues 11–280 (AKRRTFAIIS…GLVEWAPAPM (270 aa)) enclose the tr-type G domain. Residues 20 to 27 (SHPDAGKT), 88 to 92 (DTPGH), and 142 to 145 (NKLD) contribute to the GTP site.

This sequence belongs to the TRAFAC class translation factor GTPase superfamily. Classic translation factor GTPase family. PrfC subfamily.

The protein resides in the cytoplasm. In terms of biological role, increases the formation of ribosomal termination complexes and stimulates activities of RF-1 and RF-2. It binds guanine nucleotides and has strong preference for UGA stop codons. It may interact directly with the ribosome. The stimulation of RF-1 and RF-2 is significantly reduced by GTP and GDP, but not by GMP. The chain is Peptide chain release factor 3 from Shigella boydii serotype 18 (strain CDC 3083-94 / BS512).